The following is a 60-amino-acid chain: Colanic acid capsular biosynthesis activation protein B (60 aa).

This chain is Colanic acid capsular biosynthesis activation protein B (rcsB), found in Klebsiella aerogenes (Enterobacter aerogenes).